The primary structure comprises 159 residues: Probable chemoreceptor glutamine deamidase CheD 2 (159 aa).

This sequence belongs to the CheD family.

It catalyses the reaction L-glutaminyl-[protein] + H2O = L-glutamyl-[protein] + NH4(+). Functionally, probably deamidates glutamine residues to glutamate on methyl-accepting chemotaxis receptors (MCPs), playing an important role in chemotaxis. The protein is Probable chemoreceptor glutamine deamidase CheD 2 of Anaeromyxobacter dehalogenans (strain 2CP-C).